We begin with the raw amino-acid sequence, 348 residues long: Anthranilate phosphoribosyltransferase (348 aa).

5-phospho-alpha-D-ribose 1-diphosphate-binding positions include Gly83, 86–87 (GD), Thr91, 93–96 (NVST), 111–119 (KHGNRAASS), and Thr123. Gly83 lines the anthranilate pocket. Mg(2+) is bound at residue Ser95. Asn114 is an anthranilate binding site. Residue Arg169 participates in anthranilate binding. 2 residues coordinate Mg(2+): Asp227 and Glu228.

It belongs to the anthranilate phosphoribosyltransferase family. Homodimer. The cofactor is Mg(2+).

It carries out the reaction N-(5-phospho-beta-D-ribosyl)anthranilate + diphosphate = 5-phospho-alpha-D-ribose 1-diphosphate + anthranilate. It functions in the pathway amino-acid biosynthesis; L-tryptophan biosynthesis; L-tryptophan from chorismate: step 2/5. Its function is as follows. Catalyzes the transfer of the phosphoribosyl group of 5-phosphorylribose-1-pyrophosphate (PRPP) to anthranilate to yield N-(5'-phosphoribosyl)-anthranilate (PRA). This chain is Anthranilate phosphoribosyltransferase, found in Thermobifida fusca (strain YX).